We begin with the raw amino-acid sequence, 108 residues long: Type III secretion system chaperone SseA (108 aa).

The stretch at 69 to 97 forms a coiled coil; it reads NQEAEKDLKKIVSLFKQLEVRLKQLNAQA.

In terms of assembly, binds to SseB and SseD.

It is found in the cytoplasm. In terms of biological role, functions as a type III secretion system (T3SS) chaperone, which is required for SseB and SseD accumulation and secretion. May have a direct role in secretion of SseB and SseD, or may facilitate their correct folding, for efficient secretion and function. Required for survival and replication within epithelial cells and macrophages. This Salmonella typhimurium (strain LT2 / SGSC1412 / ATCC 700720) protein is Type III secretion system chaperone SseA (sseA).